Reading from the N-terminus, the 614-residue chain is Probable pectinesterase/pectinesterase inhibitor 13 (614 aa).

A helical transmembrane segment spans residues 25–45 (IIVGTVSLLVVVAAIVGGAFA). Residues 55–102 (QQQQQQQAKNHNKSGSGNNVVKDSDKKSPSPPTPSQKAPVSAAQSVKP) are disordered. Residues Asn66, Asn128, Asn197, Asn243, Asn301, Asn351, and Asn367 are each glycosylated (N-linked (GlcNAc...) asparagine). The pectinesterase inhibitor 13 stretch occupies residues 103-255 (GQGDKIIQTL…QVLTSNSLAL (153 aa)). The pectinesterase 13 stretch occupies residues 301 to 598 (NATVAKDGSG…YTVGPFLQGD (298 aa)). Residues Thr376 and Gln406 each coordinate substrate. The active-site Proton donor; for pectinesterase activity is Asp429. Cys443 and Cys463 are disulfide-bonded. Asp450 serves as the catalytic Nucleophile; for pectinesterase activity. Substrate-binding residues include Arg518 and Trp520. Asn522 and Asn588 each carry an N-linked (GlcNAc...) asparagine glycan.

The protein in the N-terminal section; belongs to the PMEI family. This sequence in the C-terminal section; belongs to the pectinesterase family. In terms of tissue distribution, expressed in flower buds.

The protein localises to the membrane. The catalysed reaction is [(1-&gt;4)-alpha-D-galacturonosyl methyl ester](n) + n H2O = [(1-&gt;4)-alpha-D-galacturonosyl](n) + n methanol + n H(+). Its pathway is glycan metabolism; pectin degradation; 2-dehydro-3-deoxy-D-gluconate from pectin: step 1/5. Acts in the modification of cell walls via demethylesterification of cell wall pectin. In Arabidopsis thaliana (Mouse-ear cress), this protein is Probable pectinesterase/pectinesterase inhibitor 13 (PME13).